The sequence spans 27 residues: uncharacterized protein (27 aa).

Its subcellular location is the plastid. It localises to the chloroplast. This is an uncharacterized protein from Trieres chinensis (Marine centric diatom).